The chain runs to 441 residues: Proline--tRNA ligase (441 aa).

Belongs to the class-II aminoacyl-tRNA synthetase family. ProS type 2 subfamily. Homodimer.

It is found in the cytoplasm. The catalysed reaction is tRNA(Pro) + L-proline + ATP = L-prolyl-tRNA(Pro) + AMP + diphosphate. In terms of biological role, catalyzes the attachment of proline to tRNA(Pro) in a two-step reaction: proline is first activated by ATP to form Pro-AMP and then transferred to the acceptor end of tRNA(Pro). The polypeptide is Proline--tRNA ligase (Bartonella quintana (strain Toulouse) (Rochalimaea quintana)).